A 200-amino-acid chain; its full sequence is Mediator of RNA polymerase II transcription subunit 8 (200 aa).

This sequence belongs to the Mediator complex subunit 8 family. As to quaternary structure, component of the Mediator complex.

It is found in the nucleus. Functionally, component of the Mediator complex, a coactivator involved in the regulated transcription of nearly all RNA polymerase II-dependent genes. Mediator functions as a bridge to convey information from gene-specific regulatory proteins to the basal RNA polymerase II transcription machinery. Mediator is recruited to promoters by direct interactions with regulatory proteins and serves as a scaffold for the assembly of a functional preinitiation complex with RNA polymerase II and the general transcription factors. This chain is Mediator of RNA polymerase II transcription subunit 8 (med8), found in Schizosaccharomyces pombe (strain 972 / ATCC 24843) (Fission yeast).